We begin with the raw amino-acid sequence, 417 residues long: Gamma-glutamyl phosphate reductase (417 aa).

It belongs to the gamma-glutamyl phosphate reductase family.

It localises to the cytoplasm. The catalysed reaction is L-glutamate 5-semialdehyde + phosphate + NADP(+) = L-glutamyl 5-phosphate + NADPH + H(+). It participates in amino-acid biosynthesis; L-proline biosynthesis; L-glutamate 5-semialdehyde from L-glutamate: step 2/2. Its function is as follows. Catalyzes the NADPH-dependent reduction of L-glutamate 5-phosphate into L-glutamate 5-semialdehyde and phosphate. The product spontaneously undergoes cyclization to form 1-pyrroline-5-carboxylate. The sequence is that of Gamma-glutamyl phosphate reductase from Meiothermus ruber.